A 234-amino-acid chain; its full sequence is Large ribosomal subunit protein uL3 (234 aa).

Residues 137–156 form a disordered region; sequence AGHGVERKHRSPGSVGGCAT.

Belongs to the universal ribosomal protein uL3 family. As to quaternary structure, part of the 50S ribosomal subunit. Forms a cluster with proteins L14 and L19.

Its function is as follows. One of the primary rRNA binding proteins, it binds directly near the 3'-end of the 23S rRNA, where it nucleates assembly of the 50S subunit. This is Large ribosomal subunit protein uL3 from Frankia alni (strain DSM 45986 / CECT 9034 / ACN14a).